A 380-amino-acid chain; its full sequence is Cytochrome b (380 aa).

4 consecutive transmembrane segments (helical) span residues 33 to 53 (FGSL…FLAM), 77 to 98 (WLIR…FLHV), 113 to 133 (WNMG…GYVL), and 178 to 198 (FFAF…VHLL). Heme b is bound by residues His83 and His97. The heme b site is built by His182 and His196. His201 lines the a ubiquinone pocket. Transmembrane regions (helical) follow at residues 226–246 (IKDF…TLFF), 288–308 (LGGV…PLLH), 320–340 (ITQI…WIGG), and 347–367 (FITI…IFMP).

It belongs to the cytochrome b family. In terms of assembly, the cytochrome bc1 complex contains 11 subunits: 3 respiratory subunits (MT-CYB, CYC1 and UQCRFS1), 2 core proteins (UQCRC1 and UQCRC2) and 6 low-molecular weight proteins (UQCRH/QCR6, UQCRB/QCR7, UQCRQ/QCR8, UQCR10/QCR9, UQCR11/QCR10 and a cleavage product of UQCRFS1). This cytochrome bc1 complex then forms a dimer. It depends on heme b as a cofactor.

The protein localises to the mitochondrion inner membrane. Component of the ubiquinol-cytochrome c reductase complex (complex III or cytochrome b-c1 complex) that is part of the mitochondrial respiratory chain. The b-c1 complex mediates electron transfer from ubiquinol to cytochrome c. Contributes to the generation of a proton gradient across the mitochondrial membrane that is then used for ATP synthesis. In Microtus oregoni (Creeping vole), this protein is Cytochrome b (MT-CYB).